A 397-amino-acid chain; its full sequence is N-acetyllactosaminide beta-1,3-N-acetylglucosaminyltransferase 2 (397 aa).

The Cytoplasmic portion of the chain corresponds to 1 to 7; it reads MSVGRRR. Residues 8–28 traverse the membrane as a helical; Signal-anchor for type II membrane protein segment; sequence VKLLGILMMANVFIYLIVEVS. Residues 29-325 are Lumenal-facing; sequence KNSSQDKNGK…ALRLYSATSR (297 aa). Residues asparagine 30, asparagine 79, asparagine 89, asparagine 127, asparagine 173, and asparagine 219 are each glycosylated (N-linked (GlcNAc...) asparagine).

Belongs to the glycosyltransferase 31 family. In terms of assembly, interacts with B3GNT8; this interaction greatly increases B3GNT2 catalytic activity, independently of B3GNT8 enzymatic activity. The cofactor is Mn(2+). In terms of tissue distribution, expressed in heart, brain, lung, kidney and testis and, to a lesser extent, in liver and skeletal muscle. No expression in spleen.

It localises to the golgi apparatus membrane. The enzyme catalyses a beta-D-galactosyl-(1-&gt;4)-N-acetyl-beta-D-glucosaminyl derivative + UDP-N-acetyl-alpha-D-glucosamine = an N-acetyl-beta-D-glucosaminyl-(1-&gt;3)-beta-D-galactosyl-(1-&gt;4)-N-acetyl-beta-D-glucosaminyl derivative + UDP + H(+). It functions in the pathway protein modification; protein glycosylation. Beta-1,3-N-acetylglucosaminyltransferase involved in the synthesis of poly-N-acetyllactosamine. Catalyzes the initiation and elongation of poly-N-acetyllactosamine chains. Probably constitutes the main polylactosamine synthase. The polypeptide is N-acetyllactosaminide beta-1,3-N-acetylglucosaminyltransferase 2 (B3GNT2) (Mus musculus (Mouse)).